Reading from the N-terminus, the 647-residue chain is Neuronal PAS domain-containing protein 4-like (647 aa).

Positions 16-29 (KRFRSTKGASKARR) are basic motif; degenerate. Residues 16–67 (KRFRSTKGASKARRDQMNSEIRNLRALLPISPEHRLSYLHSMSITCTYIRKS) enclose the bHLH domain. Residues 30 to 67 (DQMNSEIRNLRALLPISPEHRLSYLHSMSITCTYIRKS) form a helix-loop-helix motif region. PAS domains follow at residues 117–181 (VLQA…SPSG) and 238–274 (SADM…HPDD).

Heterodimer; efficient DNA binding requires dimerization with another bHLH protein. In terms of tissue distribution, specifically expressed in endothelial and hematopoietic precursor cells.

It localises to the nucleus. Functionally, transcription factor specifically expressed in endothelial and hematopoietic precursor cells that acts as a key regulator of the endothelial differentiation cascade. Acts as an early-response transcription factor that regulates the expression of early regulators of endothelial and haematopoietic differentiation, such as etv2 and tal1. This chain is Neuronal PAS domain-containing protein 4-like, found in Danio rerio (Zebrafish).